Consider the following 195-residue polypeptide: FMN-dependent NADH:quinone oxidoreductase (195 aa).

FMN is bound by residues Ser9, 15–17 (SVS), 85–88 (MYNF), and 129–132 (SRGG).

It belongs to the azoreductase type 1 family. Homodimer. FMN serves as cofactor.

It catalyses the reaction 2 a quinone + NADH + H(+) = 2 a 1,4-benzosemiquinone + NAD(+). The enzyme catalyses N,N-dimethyl-1,4-phenylenediamine + anthranilate + 2 NAD(+) = 2-(4-dimethylaminophenyl)diazenylbenzoate + 2 NADH + 2 H(+). In terms of biological role, quinone reductase that provides resistance to thiol-specific stress caused by electrophilic quinones. Functionally, also exhibits azoreductase activity. Catalyzes the reductive cleavage of the azo bond in aromatic azo compounds to the corresponding amines. The chain is FMN-dependent NADH:quinone oxidoreductase from Stenotrophomonas maltophilia (strain K279a).